The sequence spans 294 residues: Proline iminopeptidase (294 aa).

Positions 27–277 constitute an AB hydrolase-1 domain; it reads PPLVLLHGGP…GCGHMSFVEK (251 aa). The active-site Nucleophile is the serine 105. Aspartate 244 is a catalytic residue. Histidine 271 functions as the Proton donor in the catalytic mechanism.

It belongs to the peptidase S33 family.

Its subcellular location is the cell envelope. The catalysed reaction is Release of N-terminal proline from a peptide.. Functionally, releases the N-terminal proline from various substrates. The sequence is that of Proline iminopeptidase from Lactobacillus helveticus (strain DPC 4571).